We begin with the raw amino-acid sequence, 100 residues long: METRQVSRSPRVRLLLLLLLLLVVPWGVRTASGVALPPVGVLSLRPPGRAWADPATPRPRRSLALADDAAFRERARLLAALERRHWLNSYMHKLLVLDAP.

Residues 1 to 30 (METRQVSRSPRVRLLLLLLLLLVVPWGVRT) form the signal peptide. Residues 31–59 (ASGVALPPVGVLSLRPPGRAWADPATPRP) constitute a propeptide that is removed on maturation.

Belongs to the parathyroid hormone family. Ligand of high affinity for the PTH2 receptor (PTH2R).

It localises to the secreted. Plays a role as a potent and selective agonist of PTH2R resulting in adenyl cyclase activation and intracellular calcium levels elevation. Induces protein kinase C beta activation, recruitment of beta-arrestin and PTH2R internalization. May inhibit cell proliferation via its action of PTH2R activation. Neuropeptide which may also have a role in spermatogenesis. May activate nociceptors and nociceptive circuits. This Bos taurus (Bovine) protein is Tuberoinfundibular peptide of 39 residues (PTH2).